The following is a 1210-amino-acid chain: Epidermal growth factor receptor (1210 aa).

An N-terminal signal peptide occupies residues 1 to 24 (MRPSGTAGAALLALLAALCPASRA). The Extracellular segment spans residues 25–645 (LEEKKVCQGT…CARNGPKIPS (621 aa)). Cysteines 31 and 58 form a disulfide. The Approximate repeat unit spans residues 75-300 (DLSFLKTIQE…CVKKCPRNYV (226 aa)). Asn128, Asn175, and Asn196 each carry an N-linked (GlcNAc...) asparagine glycan. Disulfide bonds link Cys157–Cys187, Cys190–Cys199, Cys194–Cys207, Cys215–Cys223, Cys219–Cys231, Cys232–Cys240, Cys236–Cys248, Cys251–Cys260, Cys264–Cys291, Cys295–Cys307, Cys311–Cys326, Cys329–Cys333, and Cys337–Cys362. Ser229 is subject to Phosphoserine. Asn352, Asn361, Asn413, and Asn444 each carry an N-linked (GlcNAc...) asparagine glycan. The Approximate repeat unit spans residues 390–600 (QELDILKTVK…CVKTCPAGVM (211 aa)). Cystine bridges form between Cys470-Cys499, Cys506-Cys515, Cys510-Cys523, Cys526-Cys535, Cys539-Cys555, Cys558-Cys571, Cys562-Cys579, Cys582-Cys591, Cys595-Cys617, Cys620-Cys628, and Cys624-Cys636. N-linked (GlcNAc...) asparagine glycosylation is present at Asn528. N-linked (GlcNAc...) asparagine glycosylation is present at Asn568. Asn603 carries N-linked (GlcNAc...) asparagine glycosylation. The chain crosses the membrane as a helical span at residues 646-668 (IATGMVGALLLLLVVALGIGLFM). The Cytoplasmic segment spans residues 669–1210 (RRRHIVRKRT…APQSSEFIGA (542 aa)). The residue at position 678 (Thr678) is a Phosphothreonine; by PKC and PKD/PRKD1. Positions 688-704 (LVEPLTPSGEAPNQALL) are important for dimerization, phosphorylation and activation. Residue Thr693 is modified to Phosphothreonine; by PKD/PRKD1. Position 695 is a phosphoserine (Ser695). Residues 712-979 (FKKIKVLGSG…KMARDPQRYL (268 aa)) form the Protein kinase domain. A Glycyl lysine isopeptide (Lys-Gly) (interchain with G-Cter in ubiquitin) cross-link involves residue Lys716. ATP is bound at residue 718 to 726 (LGSGAFGTV). A Glycyl lysine isopeptide (Lys-Gly) (interchain with G-Cter in ubiquitin) cross-link involves residue Lys737. ATP is bound at residue Lys745. Lys745 is modified (N6-(2-hydroxyisobutyryl)lysine). Residues Lys754 and Lys757 each participate in a glycyl lysine isopeptide (Lys-Gly) (interchain with G-Cter in ubiquitin) cross-link. 790-791 (TQ) serves as a coordination point for ATP. Asp837 serves as the catalytic Proton acceptor. Residue Asp855 participates in ATP binding. Residue Lys867 forms a Glycyl lysine isopeptide (Lys-Gly) (interchain with G-Cter in ubiquitin) linkage. Position 869 is a phosphotyrosine (Tyr869). Glycyl lysine isopeptide (Lys-Gly) (interchain with G-Cter in ubiquitin) cross-links involve residues Lys929, Lys960, and Lys970. 2 positions are modified to phosphoserine: Ser991 and Ser995. 2 positions are modified to phosphotyrosine; by autocatalysis: Tyr998 and Tyr1016. Residues Ser1026 and Ser1039 each carry the phosphoserine modification. Position 1041 is a phosphothreonine (Thr1041). The residue at position 1042 (Ser1042) is a Phosphoserine. Residue Cys1049 is the site of S-palmitoyl cysteine attachment. The residue at position 1064 (Ser1064) is a Phosphoserine. The residue at position 1069 (Tyr1069) is a Phosphotyrosine. Phosphoserine is present on residues Ser1070, Ser1071, and Ser1081. Phosphotyrosine; by autocatalysis occurs at positions 1092 and 1110. A disordered region spans residues 1097-1137 (VPKRPAGSVQNPVYHNQPLNPAPSRDPHYQDPHSTAVGNPE). Polar residues-rich tracts occupy residues 1104 to 1115 (SVQNPVYHNQPL) and 1128 to 1137 (PHSTAVGNPE). Cys1146 carries S-palmitoyl cysteine lipidation. The residue at position 1166 (Ser1166) is a Phosphoserine. Residues Tyr1172 and Tyr1197 each carry the phosphotyrosine; by autocatalysis modification. Arg1199 is subject to Omega-N-methylarginine.

The protein belongs to the protein kinase superfamily. Tyr protein kinase family. EGF receptor subfamily. As to quaternary structure, binding of the ligand triggers homo- and/or heterodimerization of the receptor triggering its autophosphorylation. Heterodimer with ERBB2. Forms a complex with CCDC88A/GIV (via SH2-like regions) and GNAI3 which leads to enhanced EGFR signaling and triggering of cell migration; binding to CCDC88A requires autophosphorylation of the EGFR C-terminal region, and ligand stimulation is required for recruitment of GNAI3 to the complex. Interacts with ERRFI1; inhibits dimerization of the kinase domain and autophosphorylation. Part of a complex with ERBB2 and either PIK3C2A or PIK3C2B. Interacts with GRB2; an adapter protein coupling the receptor to downstream signaling pathways. Interacts with GAB2; involved in signaling downstream of EGFR. Interacts with STAT3; mediates EGFR downstream signaling in cell proliferation. Interacts with RIPK1; involved in NF-kappa-B activation. Interacts (autophosphorylated) with CBL, CBLB and CBLC; involved in EGFR ubiquitination and regulation; interaction with CBL is reduced in the presence of tensin TNS4. Interacts with SOCS5; regulates EGFR degradation through ELOC- and ELOB-mediated ubiquitination and proteasomal degradation. Interacts with PRMT5; methylates EGFR and enhances interaction with PTPN6. Interacts (phosphorylated) with PTPN6; inhibits EGFR-dependent activation of MAPK/ERK. Interacts with COPG1; essential for regulation of EGF-dependent nuclear transport of EGFR by retrograde trafficking from the Golgi to the ER. Interacts with TNK2; this interaction is dependent on EGF stimulation and kinase activity of EGFR. Interacts with PCNA; positively regulates PCNA. Interacts with PELP1. Interacts with MUC1. Interacts with AP2M1. Interacts with FER. May interact with EPS8; mediates EPS8 phosphorylation. Interacts (via SH2 domains) with GRB2, NCK1 and NCK2. Interacts with ATXN2. Interacts with GAREM1. Interacts (ubiquitinated) with ANKRD13A/B/D; the interaction is direct and may regulate EGFR internalization after EGF stimulation. Interacts with GPER1; the interaction occurs in an estrogen-dependent manner. Interacts (via C-terminal cytoplasmic kinase domain) with ZPR1 (via zinc fingers). Interacts with RNF115 and RNF126. Interacts with GPRC5A (via its transmembrane domain). Interacts with FAM83B; positively regulates EGFR inducing its autophosphorylation in absence of stimulation by EGF. Interacts with LAPTM4B; positively correlates with EGFR activation. Interacts with STX19. Interacts with CD44. Interacts with PGRMC1; the interaction requires PGRMC1 homodimerization. Interacts with PIKFYVE. Interacts with NEU3. Interacts with TRAF4. Interacts with the ant venom OMEGA-myrmeciitoxin(02)-Mg1a. Interacts with CD82; this interaction facilitates ligand-induced endocytosis of the receptor and its subsequent desensitization. Post-translationally, phosphorylated on Tyr residues in response to EGF. Phosphorylation at Ser-695 is partial and occurs only if Thr-693 is phosphorylated. Phosphorylation at Thr-678 and Thr-693 by PRKD1 inhibits EGF-induced MAPK8/JNK1 activation. Dephosphorylation by PTPRJ prevents endocytosis and stabilizes the receptor at the plasma membrane. Autophosphorylation at Tyr-1197 is stimulated by methylation at Arg-1199 and enhances interaction with PTPN6. Autophosphorylation at Tyr-1092 and/or Tyr-1110 recruits STAT3. Dephosphorylated by PTPN1 and PTPN2. In terms of processing, monoubiquitinated and polyubiquitinated upon EGF stimulation; which does not affect tyrosine kinase activity or signaling capacity but may play a role in lysosomal targeting. Polyubiquitin linkage is mainly through 'Lys-63', but linkage through 'Lys-48', 'Lys-11' and 'Lys-29' also occurs. Deubiquitination by OTUD7B prevents degradation. Ubiquitinated by RNF115 and RNF126. Ubiquitinated by ZNRF1 or CBL at different lysines in response to EGF stimulation; leading to recruitment of the ESCRT machinery and subsequent degradation in the lysosomes. Deubiquitinated by UCHL1 leading to the inhibition of its degradation. Palmitoylated on Cys residues by ZDHHC20. Palmitoylation inhibits internalization after ligand binding, and increases the persistence of tyrosine-phosphorylated EGFR at the cell membrane. Palmitoylation increases the amplitude and duration of EGFR signaling. Post-translationally, methylated. Methylation at Arg-1199 by PRMT5 stimulates phosphorylation at Tyr-1197. Hypothalamus.

It is found in the cell membrane. It localises to the endoplasmic reticulum membrane. The protein localises to the golgi apparatus membrane. Its subcellular location is the nucleus membrane. The protein resides in the endosome. It is found in the endosome membrane. It localises to the nucleus. It catalyses the reaction L-tyrosyl-[protein] + ATP = O-phospho-L-tyrosyl-[protein] + ADP + H(+). With respect to regulation, endocytosis and inhibition of the activated EGFR by phosphatases like PTPRJ and PTPRK constitute immediate regulatory mechanisms. Upon EGF-binding phosphorylates EPS15 that regulates EGFR endocytosis and activity. Moreover, inducible feedback inhibitors including LRIG1, SOCS4, SOCS5 and ERRFI1 constitute alternative regulatory mechanisms for the EGFR signaling. Its function is as follows. Receptor tyrosine kinase binding ligands of the EGF family and activating several signaling cascades to convert extracellular cues into appropriate cellular responses. Known ligands include EGF, TGFA/TGF-alpha, AREG, epigen/EPGN, BTC/betacellulin, epiregulin/EREG and HBEGF/heparin-binding EGF. Ligand binding triggers receptor homo- and/or heterodimerization and autophosphorylation on key cytoplasmic residues. The phosphorylated receptor recruits adapter proteins like GRB2 which in turn activates complex downstream signaling cascades. Activates at least 4 major downstream signaling cascades including the RAS-RAF-MEK-ERK, PI3 kinase-AKT, PLCgamma-PKC and STATs modules. May also activate the NF-kappa-B signaling cascade. Also directly phosphorylates other proteins like RGS16, activating its GTPase activity and probably coupling the EGF receptor signaling to the G protein-coupled receptor signaling. Also phosphorylates MUC1 and increases its interaction with SRC and CTNNB1/beta-catenin. Positively regulates cell migration via interaction with CCDC88A/GIV which retains EGFR at the cell membrane following ligand stimulation, promoting EGFR signaling which triggers cell migration. Plays a role in enhancing learning and memory performance. Plays a role in mammalian pain signaling (long-lasting hypersensitivity). This chain is Epidermal growth factor receptor (EGFR), found in Macaca mulatta (Rhesus macaque).